A 123-amino-acid polypeptide reads, in one-letter code: Putative iron-sulfur cluster insertion protein ErpA (123 aa).

The iron-sulfur cluster site is built by Cys-51, Cys-115, and Cys-117.

This sequence belongs to the HesB/IscA family. Homodimer. Iron-sulfur cluster is required as a cofactor.

Functionally, required for insertion of 4Fe-4S clusters. In Burkholderia ambifaria (strain ATCC BAA-244 / DSM 16087 / CCUG 44356 / LMG 19182 / AMMD) (Burkholderia cepacia (strain AMMD)), this protein is Putative iron-sulfur cluster insertion protein ErpA.